Here is a 230-residue protein sequence, read N- to C-terminus: Cytidylate kinase (230 aa).

12–20 (GPSGAGKST) lines the ATP pocket.

Belongs to the cytidylate kinase family. Type 1 subfamily.

It localises to the cytoplasm. It catalyses the reaction CMP + ATP = CDP + ADP. It carries out the reaction dCMP + ATP = dCDP + ADP. The polypeptide is Cytidylate kinase (Corynebacterium diphtheriae (strain ATCC 700971 / NCTC 13129 / Biotype gravis)).